A 348-amino-acid chain; its full sequence is Ricin B-like lectin R40C1 (348 aa).

The interval 1–26 (MFGFGHHGHHGQDQPPQHHGGGGGGA) is disordered. The Ricin B-type lectin domain maps to 199–345 (TVRIFCKADE…CEGDNQRWKI (147 aa)).

Expressed in roots and shoots.

Lectin which binds carbohydrates in vitro. Interacts through its lectin domain with glycan structures containing specific motifs. This chain is Ricin B-like lectin R40C1, found in Oryza sativa subsp. japonica (Rice).